The sequence spans 227 residues: 2-C-methyl-D-erythritol 4-phosphate cytidylyltransferase (227 aa).

The protein belongs to the IspD/TarI cytidylyltransferase family. IspD subfamily.

The enzyme catalyses 2-C-methyl-D-erythritol 4-phosphate + CTP + H(+) = 4-CDP-2-C-methyl-D-erythritol + diphosphate. It participates in isoprenoid biosynthesis; isopentenyl diphosphate biosynthesis via DXP pathway; isopentenyl diphosphate from 1-deoxy-D-xylulose 5-phosphate: step 2/6. Its function is as follows. Catalyzes the formation of 4-diphosphocytidyl-2-C-methyl-D-erythritol from CTP and 2-C-methyl-D-erythritol 4-phosphate (MEP). This is 2-C-methyl-D-erythritol 4-phosphate cytidylyltransferase from Dehalococcoides mccartyi (strain ATCC BAA-2266 / KCTC 15142 / 195) (Dehalococcoides ethenogenes (strain 195)).